We begin with the raw amino-acid sequence, 309 residues long: Aspartate carbamoyltransferase catalytic subunit (309 aa).

Carbamoyl phosphate contacts are provided by arginine 58 and threonine 59. Lysine 86 contributes to the L-aspartate binding site. Positions 108, 136, and 139 each coordinate carbamoyl phosphate. Residues arginine 169 and arginine 223 each coordinate L-aspartate. Carbamoyl phosphate-binding residues include glycine 265 and proline 266.

This sequence belongs to the aspartate/ornithine carbamoyltransferase superfamily. ATCase family. In terms of assembly, heterododecamer (2C3:3R2) of six catalytic PyrB chains organized as two trimers (C3), and six regulatory PyrI chains organized as three dimers (R2).

It catalyses the reaction carbamoyl phosphate + L-aspartate = N-carbamoyl-L-aspartate + phosphate + H(+). Its pathway is pyrimidine metabolism; UMP biosynthesis via de novo pathway; (S)-dihydroorotate from bicarbonate: step 2/3. Functionally, catalyzes the condensation of carbamoyl phosphate and aspartate to form carbamoyl aspartate and inorganic phosphate, the committed step in the de novo pyrimidine nucleotide biosynthesis pathway. The protein is Aspartate carbamoyltransferase catalytic subunit of Akkermansia muciniphila (strain ATCC BAA-835 / DSM 22959 / JCM 33894 / BCRC 81048 / CCUG 64013 / CIP 107961 / Muc).